We begin with the raw amino-acid sequence, 351 residues long: Histidinol-phosphate aminotransferase (351 aa).

Lys-215 is subject to N6-(pyridoxal phosphate)lysine.

It belongs to the class-II pyridoxal-phosphate-dependent aminotransferase family. Histidinol-phosphate aminotransferase subfamily. Requires pyridoxal 5'-phosphate as cofactor.

It carries out the reaction L-histidinol phosphate + 2-oxoglutarate = 3-(imidazol-4-yl)-2-oxopropyl phosphate + L-glutamate. It participates in amino-acid biosynthesis; L-histidine biosynthesis; L-histidine from 5-phospho-alpha-D-ribose 1-diphosphate: step 7/9. In Methanocorpusculum labreanum (strain ATCC 43576 / DSM 4855 / Z), this protein is Histidinol-phosphate aminotransferase.